A 328-amino-acid polypeptide reads, in one-letter code: MVVFTGSTVEEAIQKGLKELDIPRMKAHIKVISREKKGFLGLFGKKPAQVDIEAISETTVVKANQQVVKGVPKKINDLNEPVKTVSEETVDLGHVVDAIKKIEEEGQGISDEVKAEILKHERHASTILEETGHIEILNELQIEEAMREEAGADDLETEQDQAESQELEDLGLKVETNFDIEQVATEVMAYVQTIIDDMDVEATLSNDYNRRSINLQIDTNEPGRIIGYHGKVLKALQLLAQNYLYNRYSRTFYVTINVNDYVEHRAEVLQTYAQKLATRVLEEGRSHKTDPMSNSERKIIHRIISRMDGVTSYSEGDEPNRYVVVDTE.

The tract at residues 3–53 (VFTGSTVEEAIQKGLKELDIPRMKAHIKVISREKKGFLGLFGKKPAQVDIE) is jag_N domain. Residues 54 to 180 (AISETTVVKA…GLKVETNFDI (127 aa)) are linker. Thr89 carries the phosphothreonine modification. The KH domain occupies 181 to 258 (EQVATEVMAY…SRTFYVTINV (78 aa)). The 66-residue stretch at 263-328 (EHRAEVLQTY…PNRYVVVDTE (66 aa)) folds into the R3H domain.

The protein belongs to the KhpB RNA-binding protein family. Interacts with KhpA; the 2 proteins colocalize throughout the cell cycle, with some increase at midcell in dividing cells. Interacts with StkP which phosphorylates it, interacts with MltG, MreC, RodZ and YidC2. In terms of processing, phosphorylated on Thr-89 by StkP; there is another poorly phosphorylated residue in the protein. Dephosphorylated by PhpP.

It is found in the cytoplasm. In terms of biological role, a probable RNA chaperone. Forms a complex with KhpA which binds to cellular RNA and controls its expression. Plays a role in peptidoglycan (PG) homeostasis and cell length regulation. Forms a complex with KhpA which presumably binds to about 170 cellular RNAs (mRNA, tRNA intergenic RNA and sRNAs); the proteins alone each bind the same set of RNAs. Suppresses the requirement for PBP2b (penA, a transpeptidase) in peripheral peptidoglycan (PG) synthesis. May function as a pleiotropic RNA chaperone controlling pneumococcal cell division, including PG homeostasis and regulating peripheral PG synthesis by the elongasome. This chain is RNA-binding protein KhpB, found in Streptococcus pneumoniae serotype 2 (strain D39 / NCTC 7466).